Here is a 549-residue protein sequence, read N- to C-terminus: Arginine--tRNA ligase (549 aa).

The 'HIGH' region signature appears at 122-132 (ANPTGFLHLGH).

It belongs to the class-I aminoacyl-tRNA synthetase family. As to quaternary structure, monomer.

Its subcellular location is the cytoplasm. It carries out the reaction tRNA(Arg) + L-arginine + ATP = L-arginyl-tRNA(Arg) + AMP + diphosphate. The chain is Arginine--tRNA ligase from Mycoplasmoides gallisepticum (strain R(low / passage 15 / clone 2)) (Mycoplasma gallisepticum).